A 695-amino-acid chain; its full sequence is Polyribonucleotide nucleotidyltransferase (695 aa).

Mg(2+)-binding residues include D486 and D492. The KH domain occupies 553 to 612 (PRIETMQINTSKIATVIGPGGKQIRQIIERSGAQVDINDDGVINIAASTQESINKAKELI). An S1 motif domain is found at 622–690 (GKVYNGRVTS…EKGQLKLSHK (69 aa)).

The protein belongs to the polyribonucleotide nucleotidyltransferase family. It depends on Mg(2+) as a cofactor.

Its subcellular location is the cytoplasm. It catalyses the reaction RNA(n+1) + phosphate = RNA(n) + a ribonucleoside 5'-diphosphate. In terms of biological role, involved in mRNA degradation. Catalyzes the phosphorolysis of single-stranded polyribonucleotides processively in the 3'- to 5'-direction. The chain is Polyribonucleotide nucleotidyltransferase from Chlamydia trachomatis serovar A (strain ATCC VR-571B / DSM 19440 / HAR-13).